The sequence spans 1044 residues: Protein ITPRID1 (1044 aa).

Over residues 1 to 14 the composition is skewed to polar residues; it reads MMAQKSQGSDNLQE. Disordered regions lie at residues 1–20, 230–251, 388–489, and 583–607; these read MMAQ…EKSK, EEKA…EHRR, MEEV…SSQE, and PEGA…HTQD. Acidic residues predominate over residues 388–398; the sequence is MEEVQSFEEET. 2 stretches are compositionally biased toward polar residues: residues 460–469 and 480–489; these read HSLVSSQDCQ and RASMSFSSQE. Residues 896–937 are a coiled coil; sequence SRDMSEEEREEAEQLQTLREALRQQVAELEFQLGDRAQQIRE.

In Homo sapiens (Human), this protein is Protein ITPRID1.